We begin with the raw amino-acid sequence, 162 residues long: Caveolin-2 (162 aa).

Topologically, residues 1 to 86 are cytoplasmic; sequence MGLETEKADV…FEVSKYVIYK (86 aa). Position 19 is a phosphotyrosine; by SRC (tyrosine 19). 2 positions are modified to phosphoserine: serine 20 and serine 23. At tyrosine 27 the chain carries Phosphotyrosine; by SRC. Positions 87-107 form an intramembrane region, helical; sequence FLTLFLAIPLAFAAGILFATL. The Cytoplasmic portion of the chain corresponds to 108–162; it reads SCLHIWIVMPFVKTCLMVLPSVQTIWKSVTDVVIAPLCASVGRSFSSVSMQLSRD.

Belongs to the caveolin family. As to quaternary structure, monomer or homodimer. Interacts with CAV1; the interaction forms a stable heterooligomeric complex that is required for targeting to lipid rafts and for caveolae formation. Tyrosine phosphorylated forms do not form heterooligomers with the Tyr-19-phosphorylated form existing as a monomer or dimer, and the Tyr-27-form as a monomer only. Interacts (tyrosine phosphorylated form) with the SH2 domain-containing proteins, RASA1, NCK1 and SRC. Interacts (tyrosine phosphorylated form) with INSR, the interaction (Tyr-27-phosphorylated form) is increased on insulin stimulation. Interacts (Tyr-19 phosphorylated form) with MAPK1 (phosphorylated form); the interaction, promoted by insulin, leads to nuclear location and MAPK1 activation. Interacts with STAT3; the interaction is increased on insulin-induced tyrosine phosphorylation leading to STAT activation. Phosphorylated on serine and tyrosine residues. CAV1 promotes phosphorylation on Ser-23 which then targets the complex to the plasma membrane, lipid rafts and caveolae. Phosphorylation on both Tyr-19 and Tyr-27 is required for insulin-induced 'Ser-727' phosphorylation of STAT3 and its activation. Phosphorylation on Tyr-19 is required for insulin-induced phosphorylation of MAPK1 and DNA binding of STAT3. Tyrosine phosphorylation is induced by both EGF and insulin.

It localises to the nucleus. The protein localises to the cytoplasm. The protein resides in the golgi apparatus membrane. Its subcellular location is the cell membrane. It is found in the membrane. It localises to the caveola. Functionally, may act as a scaffolding protein within caveolar membranes. Interacts directly with G-protein alpha subunits and can functionally regulate their activity. Acts as an accessory protein in conjunction with CAV1 in targeting to lipid rafts and driving caveolae formation. Positive regulator of cellular mitogenesis of the MAPK signaling pathway. Required for the insulin-stimulated nuclear translocation and activation of MAPK1 and STAT3, and the subsequent regulation of cell cycle progression. This is Caveolin-2 (CAV2) from Rhinolophus ferrumequinum (Greater horseshoe bat).